Here is a 318-residue protein sequence, read N- to C-terminus: tRNA dimethylallyltransferase (318 aa).

21-28 (GPTATGKS) provides a ligand contact to ATP. 23–28 (TATGKS) provides a ligand contact to substrate. Residues 46–49 (DSMQ) form an interaction with substrate tRNA region.

The protein belongs to the IPP transferase family. In terms of assembly, monomer. Requires Mg(2+) as cofactor.

It carries out the reaction adenosine(37) in tRNA + dimethylallyl diphosphate = N(6)-dimethylallyladenosine(37) in tRNA + diphosphate. Catalyzes the transfer of a dimethylallyl group onto the adenine at position 37 in tRNAs that read codons beginning with uridine, leading to the formation of N6-(dimethylallyl)adenosine (i(6)A). This chain is tRNA dimethylallyltransferase, found in Acidothermus cellulolyticus (strain ATCC 43068 / DSM 8971 / 11B).